The primary structure comprises 230 residues: Type 4 apparatus protein DotY (230 aa).

The disordered stretch occupies residues 202 to 230 (EPKALETKREEIRQEIESGAEAPTTQSIR). Residues 204 to 217 (KALETKREEIRQEI) are compositionally biased toward basic and acidic residues.

In terms of assembly, the T4BSS is a complex nanomachine composed of several subcomplexes. This subunit is part of the Type IV Coupling Complex (T4CC), a subcomplex composed of the DotLMNYZ core and the IcmSW-LvgA adapter subunits, linked by the C-terminal tail of DotL. Six DotLMNYZ hetero-pentameric units may assemble into a hexameric nanomachine, forming an inner membrane channel for effectors to pass through. Interacts exclusively with DotZ. DotY and DotZ are co-dependent for the assembly into the T4CC.

It is found in the cytoplasm. Its function is as follows. Component of the Dot/Icm type IVB secretion system (T4BSS), which is used to inject bacterial effector proteins into eukaryotic host cells. Part of a subcomplex which recruits effector proteins and delivers them to the core transmembrane subcomplex. DotY and DotZ play a role in effector translocation, but are not essential and do not influence the stability of the subcomplex main components. The DotY/DotZ main function is to optimize secretion by modulating the delivery trajectory of the IcmSW module and the localization of the machinery to the poles. The chain is Type 4 apparatus protein DotY from Legionella pneumophila subsp. pneumophila (strain Philadelphia 1 / ATCC 33152 / DSM 7513).